Consider the following 223-residue polypeptide: Deoxyribose-phosphate aldolase (223 aa).

D89 (proton donor/acceptor) is an active-site residue. The active-site Schiff-base intermediate with acetaldehyde is the K154. Catalysis depends on K183, which acts as the Proton donor/acceptor.

It belongs to the DeoC/FbaB aldolase family. DeoC type 1 subfamily.

It is found in the cytoplasm. The catalysed reaction is 2-deoxy-D-ribose 5-phosphate = D-glyceraldehyde 3-phosphate + acetaldehyde. It participates in carbohydrate degradation; 2-deoxy-D-ribose 1-phosphate degradation; D-glyceraldehyde 3-phosphate and acetaldehyde from 2-deoxy-alpha-D-ribose 1-phosphate: step 2/2. Its function is as follows. Catalyzes a reversible aldol reaction between acetaldehyde and D-glyceraldehyde 3-phosphate to generate 2-deoxy-D-ribose 5-phosphate. The protein is Deoxyribose-phosphate aldolase of Thermoanaerobacter sp. (strain X514).